The sequence spans 71 residues: Disintegrin horridistatin-2 (71 aa).

The Disintegrin domain maps to 1–71; sequence GEECDCGSPA…ADCPRNGLYG (71 aa). Disulfide bonds link C4–C19, C6–C14, C13–C36, C27–C33, C32–C57, and C45–C64. The Cell attachment site signature appears at 49–51; it reads RGD.

The protein belongs to the venom metalloproteinase (M12B) family. P-II subfamily. P-IIa sub-subfamily. As to quaternary structure, monomer (disintegrin). Expressed by the venom gland.

The protein resides in the secreted. Inhibits ADP-induced platelet aggregation (IC(50) is 16.2 nM) by binding to alpha-IIb/beta-3 (ITGA2B/ITGB3). This is Disintegrin horridistatin-2 from Crotalus horridus (Timber rattlesnake).